A 221-amino-acid polypeptide reads, in one-letter code: NEDD4 family-interacting protein 1 (221 aa).

A2 is modified (N-acetylalanine). The interval 2–41 is interaction with UBE2L3; the sequence is ALALAALAAVEPACGTGYQQLQNEEEPGEREQTAGDAPPP. Topologically, residues 2–116 are cytoplasmic; that stretch reads ALALAALAAV…ADQLRIGNDG (115 aa). The tract at residues 15-45 is disordered; sequence CGTGYQQLQNEEEPGEREQTAGDAPPPYSSI. 3 short sequence motifs (PPxY motif) span residues 39–42, 64–67, and 74–76; these read PPPY, PPSY, and PSY. The interaction with ITCH stretch occupies residues 42–76; it reads YSSISAESAAYFDYKDESGFPKPPSYNVATTLPSY. Residues 117–137 traverse the membrane as a helical segment; the sequence is IFMLTFFMAFLFNWIGFFLSF. The Extracellular portion of the chain corresponds to 138 to 143; the sequence is CLTTSA. The helical transmembrane segment at 144–164 threads the bilayer; that stretch reads AGRYGAISGFGLSLIKWILIV. Over 165–172 the chain is Cytoplasmic; it reads RFSTYFPG. A helical membrane pass occupies residues 173-193; it reads YFDGQYWLWWVFLVLGFLLFL. The Extracellular segment spans residues 194–221; the sequence is RGFINYAKVRKMPETFSNLPRTRVLFIY.

As to quaternary structure, forms heterodimers with NDFIP2. Interacts with several E3 ubiquitin-protein ligases, including ITCH, NEDD4, NEDD4L and WWP2. The interaction with NEDD4, NEDD4L and ITCH leads to relocalization of these proteins to exosomes and eventually to exosomal secretion. Interacts with SR1402. Interacts with SLC11A2/DMT1. Interacts with PTEN. May interact with phosphorylated EGFR. Interacts with BRAT1. Interacts with KCNH2. Interacts with MAVS. Part of a complex containing ITCH, NDFIP1 and MAP3K7. Interacts (via N-terminus) with UBE2L3; the interaction mediates recruitment of UBE2L3 to ITCH. In terms of processing, ubiquitinated by NEDD4; mono-, di- and polyubiquitinated forms are detected. Ubiquitination regulates its degradation. Post-translationally, undergoes transient tyrosine phosphorylation following EGF stimulation, most probably by catalyzed by SRC. Phosphorylation SRC is enhanced in the presence of NDFIP2 which may act as a scaffold to recruit SRC to NDFIP1.

It localises to the endosome membrane. The protein resides in the golgi apparatus membrane. Its subcellular location is the synapse. The protein localises to the synaptosome. It is found in the cell projection. It localises to the dendrite. The protein resides in the secreted. Activates HECT domain-containing E3 ubiquitin-protein ligases, including NEDD4 and ITCH, and consequently modulates the stability of their targets. As a result, controls many cellular processes. Prevents chronic T-helper cell-mediated inflammation by activating ITCH and thus controlling JUNB degradation. Promotes pancreatic beta cell death through degradation of JUNB and inhibition of the unfolded protein response, leading to reduction of insulin secretion. Restricts the production of pro-inflammatory cytokines in effector Th17 T-cells by promoting ITCH-mediated ubiquitination degradation of RORC. Together with NDFIP2, limits the cytokine signaling and expansion of effector Th2 T-cells by promoting degradation of JAK1, probably by ITCH- and NEDD4L-mediated ubiquitination. Regulates peripheral T-cell tolerance to self and foreign antigens, forcing the exit of naive CD4+ T-cells from the cell cycle before they become effector T-cells. Negatively regulates RLR-mediated antiviral response by promoting SMURF1-mediated ubiquitination and subsequent degradation of MAVS. Negatively regulates KCNH2 potassium channel activity by decreasing its cell-surface expression and interfering with channel maturation through recruitment of NEDD4L to the Golgi apparatus where it mediates KCNH2 degradation. In cortical neurons, mediates the ubiquitination of the divalent metal transporter SLC11A2/DMT1 by NEDD4L, leading to its down-regulation and protection of the cells from cobalt and iron toxicity. Important for normal development of dendrites and dendritic spines in cortex. Enhances the ubiquitination of BRAT1 mediated by: NEDD4, NEDD4L and ITCH and is required for the nuclear localization of ubiquitinated BRAT1. Enhances the ITCH-mediated ubiquitination of MAP3K7 by recruiting E2 ubiquitin-conjugating enzyme UBE2L3 to ITCH. Modulates EGFR signaling through multiple pathways. In particular, may regulate the ratio of AKT1-to-MAPK8 signaling in response to EGF, acting on AKT1 probably through PTEN destabilization and on MAPK8 through ITCH-dependent MAP2K4 inactivation. As a result, may control cell growth rate. Inhibits cell proliferation by promoting PTEN nuclear localization and changing its signaling specificity. This chain is NEDD4 family-interacting protein 1 (Ndfip1), found in Rattus norvegicus (Rat).